Here is a 382-residue protein sequence, read N- to C-terminus: Na(+)/H(+) antiporter NhaA 2 (382 aa).

11 consecutive transmembrane segments (helical) span residues 7 to 27, 58 to 78, 94 to 114, 124 to 144, 153 to 173, 178 to 198, 199 to 219, 255 to 275, 291 to 311, 327 to 347, and 361 to 381; these read MALS…LALL, LDLW…GLEL, SLPI…FAAI, GWAI…MLLG, LFLL…IALF, LSAL…LLNY, YHIT…IAML, NPWV…GIDI, IILG…FIAI, FYGI…IDGL, and LAIL…LKIV.

The protein belongs to the NhaA Na(+)/H(+) (TC 2.A.33) antiporter family.

Its subcellular location is the cell inner membrane. The enzyme catalyses Na(+)(in) + 2 H(+)(out) = Na(+)(out) + 2 H(+)(in). In terms of biological role, na(+)/H(+) antiporter that extrudes sodium in exchange for external protons. This chain is Na(+)/H(+) antiporter NhaA 2, found in Campylobacter jejuni subsp. doylei (strain ATCC BAA-1458 / RM4099 / 269.97).